The sequence spans 352 residues: Anthranilate phosphoribosyltransferase (352 aa).

Residues Gly-83, 86–87, Thr-91, 93–96, 111–119, and Ala-123 contribute to the 5-phospho-alpha-D-ribose 1-diphosphate site; these read GD, NIST, and KHGGRSVSS. An anthranilate-binding site is contributed by Gly-83. Position 95 (Ser-95) interacts with Mg(2+). Arg-169 contacts anthranilate. 2 residues coordinate Mg(2+): Asp-228 and Glu-229.

Belongs to the anthranilate phosphoribosyltransferase family. As to quaternary structure, homodimer. It depends on Mg(2+) as a cofactor.

The catalysed reaction is N-(5-phospho-beta-D-ribosyl)anthranilate + diphosphate = 5-phospho-alpha-D-ribose 1-diphosphate + anthranilate. It participates in amino-acid biosynthesis; L-tryptophan biosynthesis; L-tryptophan from chorismate: step 2/5. Catalyzes the transfer of the phosphoribosyl group of 5-phosphorylribose-1-pyrophosphate (PRPP) to anthranilate to yield N-(5'-phosphoribosyl)-anthranilate (PRA). The chain is Anthranilate phosphoribosyltransferase from Neisseria meningitidis serogroup C (strain 053442).